Reading from the N-terminus, the 882-residue chain is HTH-type transcriptional regulator AlkS (882 aa).

51-58 contributes to the ATP binding site; sequence APPGYGKT. An HTH luxR-type domain is found at 815–880; that stretch reads ENKADALLTR…QATIEAERQG (66 aa). The segment at residues 839–858 is a DNA-binding region (H-T-H motif); sequence NKQIATNMHVTEDAIKWHMR.

Its pathway is hydrocarbon metabolism; alkane degradation. This protein activates the expression of alkBFGHJKL operon in the presence of alkanes. The sequence is that of HTH-type transcriptional regulator AlkS (alkS) from Ectopseudomonas oleovorans (Pseudomonas oleovorans).